Here is a 432-residue protein sequence, read N- to C-terminus: Amino-acid acetyltransferase (432 aa).

In terms of domain architecture, N-acetyltransferase spans 286–425 (EKLREATIED…ASLYNYQRQS (140 aa)).

This sequence belongs to the acetyltransferase family. ArgA subfamily.

The protein localises to the cytoplasm. It carries out the reaction L-glutamate + acetyl-CoA = N-acetyl-L-glutamate + CoA + H(+). Its pathway is amino-acid biosynthesis; L-arginine biosynthesis; N(2)-acetyl-L-ornithine from L-glutamate: step 1/4. The protein is Amino-acid acetyltransferase of Azotobacter vinelandii (strain DJ / ATCC BAA-1303).